A 58-amino-acid chain; its full sequence is Large ribosomal subunit protein bL32 (58 aa).

The protein belongs to the bacterial ribosomal protein bL32 family.

This is Large ribosomal subunit protein bL32 from Anaplasma phagocytophilum (strain HZ).